A 414-amino-acid chain; its full sequence is Serine/threonine transporter SstT (414 aa).

8 consecutive transmembrane segments (helical) span residues Gly22–Phe42, Ile54–Ala74, Ile89–Phe109, Ala148–Leu168, Ile189–Leu209, Leu223–Val243, Met305–Leu325, and Ile337–Ile357.

This sequence belongs to the dicarboxylate/amino acid:cation symporter (DAACS) (TC 2.A.23) family.

It localises to the cell inner membrane. The catalysed reaction is L-serine(in) + Na(+)(in) = L-serine(out) + Na(+)(out). The enzyme catalyses L-threonine(in) + Na(+)(in) = L-threonine(out) + Na(+)(out). Its function is as follows. Involved in the import of serine and threonine into the cell, with the concomitant import of sodium (symport system). The polypeptide is Serine/threonine transporter SstT (Haemophilus influenzae (strain PittEE)).